The chain runs to 176 residues: Outer membrane protein assembly factor BamE (176 aa).

The N-terminal stretch at 1–21 (MQNAKLMLTCLAFAGLAALAG) is a signal peptide. Residue Cys22 is the site of N-palmitoyl cysteine attachment. Cys22 is lipidated: S-diacylglycerol cysteine. Positions 121–176 (KEGSTTVTQPADQQKPEAQKEEPPKPGSTLEQLQREVDEAQPVPVPTPEPLDPSPQ) are disordered. Residues 123 to 132 (GSTTVTQPAD) are compositionally biased toward polar residues. The segment covering 134–144 (QKPEAQKEEPP) has biased composition (basic and acidic residues). The span at 163-176 (VPVPTPEPLDPSPQ) shows a compositional bias: pro residues.

It belongs to the BamE family. Part of the Bam complex.

The protein resides in the cell outer membrane. Its function is as follows. Part of the outer membrane protein assembly complex, which is involved in assembly and insertion of beta-barrel proteins into the outer membrane. May have a structural role in maintaining the cell envelope integrity. In Pseudomonas aeruginosa (strain ATCC 15692 / DSM 22644 / CIP 104116 / JCM 14847 / LMG 12228 / 1C / PRS 101 / PAO1), this protein is Outer membrane protein assembly factor BamE.